Consider the following 209-residue polypeptide: Uracil phosphoribosyltransferase (209 aa).

5-phospho-alpha-D-ribose 1-diphosphate-binding positions include R79, R104, and 131 to 139 (DPMLATGGS). Uracil is bound by residues I194 and 199–201 (GDA). D200 provides a ligand contact to 5-phospho-alpha-D-ribose 1-diphosphate.

This sequence belongs to the UPRTase family. The cofactor is Mg(2+).

The catalysed reaction is UMP + diphosphate = 5-phospho-alpha-D-ribose 1-diphosphate + uracil. It functions in the pathway pyrimidine metabolism; UMP biosynthesis via salvage pathway; UMP from uracil: step 1/1. Its activity is regulated as follows. Allosterically activated by GTP. In terms of biological role, catalyzes the conversion of uracil and 5-phospho-alpha-D-ribose 1-diphosphate (PRPP) to UMP and diphosphate. This is Uracil phosphoribosyltransferase from Streptococcus pyogenes serotype M49 (strain NZ131).